We begin with the raw amino-acid sequence, 174 residues long: Beta-lactoglobulin (174 aa).

Positions 1–18 are cleaved as a signal peptide; it reads MKFLLLTVGLALIGAIQA. Cystine bridges form between Cys-79-Cys-172 and Cys-122-Cys-134.

Belongs to the calycin superfamily. Lipocalin family. In terms of assembly, monomer.

The protein resides in the secreted. Lactoglobulin is the primary component of whey, it binds retinol and is probably involved in the transport of that molecule. The polypeptide is Beta-lactoglobulin (LGB) (Notamacropus eugenii (Tammar wallaby)).